A 272-amino-acid polypeptide reads, in one-letter code: 4-hydroxy-tetrahydrodipicolinate reductase (272 aa).

NAD(+)-binding positions include 11–16 and Glu37; that span reads GAGGRM. An NADP(+)-binding site is contributed by Arg38. Residues 101–103 and 125–128 each bind NAD(+); these read GTT and AANF. The Proton donor/acceptor role is filled by His158. (S)-2,3,4,5-tetrahydrodipicolinate is bound at residue His159. The Proton donor role is filled by Lys162. 168–169 contributes to the (S)-2,3,4,5-tetrahydrodipicolinate binding site; sequence GT.

This sequence belongs to the DapB family. As to quaternary structure, homotetramer.

It localises to the cytoplasm. The enzyme catalyses (S)-2,3,4,5-tetrahydrodipicolinate + NAD(+) + H2O = (2S,4S)-4-hydroxy-2,3,4,5-tetrahydrodipicolinate + NADH + H(+). The catalysed reaction is (S)-2,3,4,5-tetrahydrodipicolinate + NADP(+) + H2O = (2S,4S)-4-hydroxy-2,3,4,5-tetrahydrodipicolinate + NADPH + H(+). It participates in amino-acid biosynthesis; L-lysine biosynthesis via DAP pathway; (S)-tetrahydrodipicolinate from L-aspartate: step 4/4. Functionally, catalyzes the conversion of 4-hydroxy-tetrahydrodipicolinate (HTPA) to tetrahydrodipicolinate. In Edwardsiella ictaluri (strain 93-146), this protein is 4-hydroxy-tetrahydrodipicolinate reductase.